Reading from the N-terminus, the 92-residue chain is Putative membrane protein insertion efficiency factor (92 aa).

It belongs to the UPF0161 family.

Its subcellular location is the cell membrane. Could be involved in insertion of integral membrane proteins into the membrane. This chain is Putative membrane protein insertion efficiency factor, found in Tropheryma whipplei (strain TW08/27) (Whipple's bacillus).